Here is a 251-residue protein sequence, read N- to C-terminus: Triosephosphate isomerase (251 aa).

9-11 (NWK) serves as a coordination point for substrate. The Electrophile role is filled by H95. The Proton acceptor role is filled by E167. Substrate is bound by residues G173, S212, and 233-234 (GG).

Belongs to the triosephosphate isomerase family. In terms of assembly, homodimer.

Its subcellular location is the cytoplasm. The enzyme catalyses D-glyceraldehyde 3-phosphate = dihydroxyacetone phosphate. The protein operates within carbohydrate biosynthesis; gluconeogenesis. It functions in the pathway carbohydrate degradation; glycolysis; D-glyceraldehyde 3-phosphate from glycerone phosphate: step 1/1. In terms of biological role, involved in the gluconeogenesis. Catalyzes stereospecifically the conversion of dihydroxyacetone phosphate (DHAP) to D-glyceraldehyde-3-phosphate (G3P). In Pseudomonas fluorescens (strain ATCC BAA-477 / NRRL B-23932 / Pf-5), this protein is Triosephosphate isomerase.